The chain runs to 94 residues: Large ribosomal subunit protein eL36 (94 aa).

Residues 1 to 25 are compositionally biased toward basic residues; it reads MKNAYKKVRVRYPVKRPDVKRKQRG. Residues 1 to 30 are disordered; the sequence is MKNAYKKVRVRYPVKRPDVKRKQRGPRAET.

The protein belongs to the eukaryotic ribosomal protein eL36 family. In terms of assembly, component of the large ribosomal subunit.

The protein resides in the cytoplasm. This is Large ribosomal subunit protein eL36 (RPL36) from Encephalitozoon cuniculi (strain GB-M1) (Microsporidian parasite).